The primary structure comprises 316 residues: Glycine--tRNA ligase alpha subunit (316 aa).

Belongs to the class-II aminoacyl-tRNA synthetase family. As to quaternary structure, tetramer of two alpha and two beta subunits.

The protein resides in the cytoplasm. It carries out the reaction tRNA(Gly) + glycine + ATP = glycyl-tRNA(Gly) + AMP + diphosphate. The protein is Glycine--tRNA ligase alpha subunit of Paracoccus denitrificans (strain Pd 1222).